The primary structure comprises 71 residues: Protein SlyX homolog (71 aa).

Belongs to the SlyX family.

The polypeptide is Protein SlyX homolog (Stutzerimonas stutzeri (strain A1501) (Pseudomonas stutzeri)).